The primary structure comprises 300 residues: 7-methylguanosine phosphate-specific 5'-nucleotidase (300 aa).

Asp41 acts as the Nucleophile in catalysis. Mg(2+) contacts are provided by Asp41 and Asp43. Asp43 (proton donor) is an active-site residue. Position 88 (Glu88) interacts with CMP. Glu88 lines the N(7)-methyl-GMP pocket. Substrate is bound by residues 156–157 (SA) and Lys205. Residue Asp230 participates in Mg(2+) binding. Lys256 carries the post-translational modification N6-acetyllysine.

This sequence belongs to the pyrimidine 5'-nucleotidase family. Monomer.

It localises to the cytoplasm. It carries out the reaction N(7)-methyl-GMP + H2O = N(7)-methylguanosine + phosphate. The catalysed reaction is CMP + H2O = cytidine + phosphate. It catalyses the reaction a ribonucleoside 5'-phosphate + H2O = a ribonucleoside + phosphate. In terms of biological role, specifically hydrolyzes 7-methylguanosine monophosphate (m(7)GMP) to 7-methylguanosine and inorganic phosphate. The specific activity for m(7)GMP may protect cells against undesired salvage of m(7)GMP and its incorporation into nucleic acids. Also has weak activity for CMP. UMP and purine nucleotides are poor substrates. The protein is 7-methylguanosine phosphate-specific 5'-nucleotidase (Nt5c3b) of Rattus norvegicus (Rat).